Consider the following 143-residue polypeptide: Large ribosomal subunit protein uL11 (143 aa).

Belongs to the universal ribosomal protein uL11 family. Part of the ribosomal stalk of the 50S ribosomal subunit. Interacts with L10 and the large rRNA to form the base of the stalk. L10 forms an elongated spine to which L12 dimers bind in a sequential fashion forming a multimeric L10(L12)X complex. In terms of processing, one or more lysine residues are methylated.

Its function is as follows. Forms part of the ribosomal stalk which helps the ribosome interact with GTP-bound translation factors. This chain is Large ribosomal subunit protein uL11, found in Saccharophagus degradans (strain 2-40 / ATCC 43961 / DSM 17024).